The chain runs to 363 residues: Spermidine/putrescine import ATP-binding protein PotA (363 aa).

Residues Leu4–Ile234 form the ABC transporter domain. Gly36 to Thr43 lines the ATP pocket.

This sequence belongs to the ABC transporter superfamily. Spermidine/putrescine importer (TC 3.A.1.11.1) family. In terms of assembly, the complex is composed of two ATP-binding proteins (PotA), two transmembrane proteins (PotB and PotC) and a solute-binding protein (PotD).

It localises to the cell inner membrane. It catalyses the reaction ATP + H2O + polyamine-[polyamine-binding protein]Side 1 = ADP + phosphate + polyamineSide 2 + [polyamine-binding protein]Side 1.. Its function is as follows. Part of the ABC transporter complex PotABCD involved in spermidine/putrescine import. Responsible for energy coupling to the transport system. This is Spermidine/putrescine import ATP-binding protein PotA from Nitrosospira multiformis (strain ATCC 25196 / NCIMB 11849 / C 71).